Here is a 241-residue protein sequence, read N- to C-terminus: MAPK phosphothreonine lyase (241 aa).

Residue H106 is the Proton donor of the active site. K136 acts as the Proton acceptor in catalysis.

The protein belongs to the phosphothreonine lyase family.

The protein localises to the secreted. In terms of biological role, secreted effector that irreversibly inactivates host MAP kinases by catalyzing the dephosphorylation of the phosphothreonine residue in the pT-X-pY motif present in MAPKs, via a beta-elimination reaction leading to a dehydrobutyrine residue. This Salmonella enteritidis protein is MAPK phosphothreonine lyase (spvC).